We begin with the raw amino-acid sequence, 198 residues long: NAD(P)H dehydrogenase (quinone) (198 aa).

Positions I4 to V189 constitute a Flavodoxin-like domain. FMN is bound by residues S10–I15 and T78–F80. NAD(+) is bound at residue Y12. W98 provides a ligand contact to substrate. FMN is bound by residues S113–G118 and H133.

Belongs to the WrbA family. It depends on FMN as a cofactor.

It catalyses the reaction a quinone + NADH + H(+) = a quinol + NAD(+). The catalysed reaction is a quinone + NADPH + H(+) = a quinol + NADP(+). In Salmonella paratyphi C (strain RKS4594), this protein is NAD(P)H dehydrogenase (quinone).